The following is a 345-amino-acid chain: D-erythrose-4-phosphate dehydrogenase (345 aa).

11–12 provides a ligand contact to NAD(+); it reads RI. Residues 158 to 160, Arg204, 217 to 218, and Arg240 contribute to the substrate site; these read SCT and TK. Catalysis depends on Cys159, which acts as the Nucleophile. Asn322 is an NAD(+) binding site.

It belongs to the glyceraldehyde-3-phosphate dehydrogenase family. Epd subfamily. As to quaternary structure, homotetramer.

It is found in the cytoplasm. It catalyses the reaction D-erythrose 4-phosphate + NAD(+) + H2O = 4-phospho-D-erythronate + NADH + 2 H(+). It functions in the pathway cofactor biosynthesis; pyridoxine 5'-phosphate biosynthesis; pyridoxine 5'-phosphate from D-erythrose 4-phosphate: step 1/5. Functionally, catalyzes the NAD-dependent conversion of D-erythrose 4-phosphate to 4-phosphoerythronate. The sequence is that of D-erythrose-4-phosphate dehydrogenase from Vibrio campbellii (strain ATCC BAA-1116).